The following is a 1162-amino-acid chain: Reticulon-4 (1162 aa).

Met-1 is modified (N-acetylmethionine). Positions Met-1–Ile-183 are disordered. Residues Met-1–Gly-988 are Cytoplasmic-facing. Ser-7 and Ser-16 each carry phosphoserine. The span at Ser-7–Ser-16 shows a compositional bias: low complexity. A compositionally biased stretch (acidic residues) spans Glu-31–Glu-54. Over residues Pro-85 to Ala-99 the composition is skewed to pro residues. The residue at position 105 (Ser-105) is a Phosphoserine. Residues Ser-109–Lys-127 show a composition bias toward low complexity. Phosphoserine occurs at positions 145, 165, 167, 329, and 344. At Thr-348 the chain carries Phosphothreonine. Over residues Ser-408–Asn-422 the composition is skewed to basic and acidic residues. A disordered region spans residues Ser-408–Glu-432. Ser-426 carries the phosphoserine modification. At Thr-430 the chain carries Phosphothreonine. 5 positions are modified to phosphoserine: Ser-489, Ser-690, Ser-727, Ser-768, and Ser-832. Residues Glu-711–Ser-730 form a disordered region. The span at Val-713–Ser-730 shows a compositional bias: acidic residues. Phosphothreonine is present on Thr-834. Residues Ser-857 and Ser-961 each carry the phosphoserine modification. In terms of domain architecture, Reticulon spans Val-975–Glu-1162. Residues Val-989–Val-1009 traverse the membrane as a helical segment. At Thr-1010–Arg-1078 the chain is on the lumenal side. An N6-acetyllysine modification is found at Lys-1074. A helical transmembrane segment spans residues Leu-1079 to Thr-1099. Over Tyr-1100 to Glu-1162 the chain is Cytoplasmic.

Binds to RTN4R. Interacts with ATL1. Interacts with TMEM170A. Interacts with RTN4IP1. As to quaternary structure, interacts in trans with CNTNAP1. Interacts with REEP5. Interacts with GPR50. Interacts with synaptic plasticity regulator PANTS; the interaction results in enhanced RTN4-mediated inhibition of AMPA receptor clustering. In terms of assembly, homodimer. Interacts with BAD/Bcl-xl and BCL2. Interact with RTN3. Interacts with NGBR. Interacts with SPTLC1. Interacts with GRAMD4. Interacts with CDH5. Interacts with BACE1 and BACE2. Interacts with REEP5. Interacts with RETREG3. Interacts with BACE1 and BACE2. Interacts with TMEM33. Expressed in cardiomyocytes (at protein level). Highly expressed in brain but not deteceted in aorta, femoral and carotid arteries. Main isoform expressed in neurons. In terms of tissue distribution, expressed in cardiomyocytes (at protein level). Expressed in splenocytes, T-cells, B-cells, bone marrow derived dendritic cells and macrophages (at protein level). Expressed in neurons. Highly expressed in endothelial cells and vascular smooth muscle cells, including blood vessels and mesenteric arteries. Expressed in bronchial and alveolar epithelial cells as well as vascular endothelial cells of lungs. As to expression, expressed in B-cells, bone marrow dendritic cells and macrophages (at protein level). Expressed in cardiomyocytes. In terms of tissue distribution, expressed at very low levels in neurons.

The protein resides in the endoplasmic reticulum membrane. It localises to the cell membrane. The protein localises to the synapse. Its subcellular location is the cell junction. Required to induce the formation and stabilization of endoplasmic reticulum (ER) tubules. They regulate membrane morphogenesis in the ER by promoting tubular ER production. They influence nuclear envelope expansion, nuclear pore complex formation and proper localization of inner nuclear membrane proteins. However each isoform have specific functions mainly depending on their tissue expression specificities. Functionally, developmental neurite growth regulatory factor with a role as a negative regulator of axon-axon adhesion and growth, and as a facilitator of neurite branching. Regulates neurite fasciculation, branching and extension in the developing nervous system. Involved in down-regulation of growth, stabilization of wiring and restriction of plasticity in the adult CNS. Regulates the radial migration of cortical neurons via an RTN4R-LINGO1 containing receptor complex. Acts as a negative regulator of central nervous system angiogenesis. Inhibits spreading, migration and sprouting of primary brain microvascular endothelial cells (MVECs). Also induces the retraction of MVECs lamellipodia and filopodia in a ROCK pathway-dependent manner. Its function is as follows. Mainly function in endothelial cells and vascular smooth muscle cells, is also involved in immune system regulation. Modulator of vascular remodeling, promotes the migration of endothelial cells but inhibits the migration of vascular smooth muscle cells. Regulates endothelial sphingolipid biosynthesis with direct effects on vascular function and blood pressure. Inhibits serine palmitoyltransferase, SPTLC1, the rate-limiting enzyme of the novo sphingolipid biosynthetic pathway, thereby controlling production of endothelial sphingosine-1-phosphate (S1P). Required to promote macrophage homing and functions such as cytokine/chemokine gene expression involved in angiogenesis, arteriogenesis and tissue repair. Mediates ICAM1 induced transendothelial migration of leukocytes such as monocytes and neutrophils and acute inflammation. Necessary for immune responses triggered by nucleic acid sensing TLRs, such as TLR9, is required for proper TLR9 location to endolysosomes. Also involved in immune response to LPS. Plays a role in liver regeneration through the modulation of hepatocytes proliferation. Reduces the anti-apoptotic activity of Bcl-xl and Bcl-2. This is likely consecutive to their change in subcellular location, from the mitochondria to the endoplasmic reticulum, after binding and sequestration. With isoform C, inhibits BACE1 activity and amyloid precursor protein processing. In terms of biological role, regulates cardiomyocyte apoptosis upon hypoxic conditions. With isoform B, inhibits BACE1 activity and amyloid precursor protein processing. This is Reticulon-4 from Mus musculus (Mouse).